Consider the following 259-residue polypeptide: MNIRPLRQSVRPSPIFLLVIAVTAAGGALAWIAADTIRPLSYVGVFILVIAGWLMSLCLHEFGHAFTAWRFGDHGVETRGYLTLNPLKYTHPMLSLGLPVLIIALGGIGFPGGAVYLQTHWMTARQKSIVSLAGPAANLVLAVLLLGLTRAFWDPAHAVFWSGIAFLGFLQVTALVLNLLPIPGLDGYGALEPHLNPETQRALAPAKQWGFLIVVVLLITPALNRWFFELVYWFFDFSGVSSYLVSAGGQLTRFWSAWF.

A run of 2 helical transmembrane segments spans residues 14–34 (PIFLLVIAVTAAGGALAWIAA) and 39–59 (PLSYVGVFILVIAGWLMSLCL). His-60 lines the Zn(2+) pocket. Glu-61 is a catalytic residue. His-64 provides a ligand contact to Zn(2+). Transmembrane regions (helical) follow at residues 96-116 (LGLPVLIIALGGIGFPGGAVY), 129-149 (IVSLAGPAANLVLAVLLLGLT), 159-179 (VFWSGIAFLGFLQVTALVLNL), and 203-223 (LAPAKQWGFLIVVVLLITPAL).

Belongs to the peptidase M50B family. It depends on Zn(2+) as a cofactor.

The protein resides in the cell membrane. The protein is Putative zinc metalloprotease Rip2 (rip2) of Mycolicibacterium smegmatis (strain ATCC 700084 / mc(2)155) (Mycobacterium smegmatis).